We begin with the raw amino-acid sequence, 497 residues long: ATP synthase subunit alpha 2 (497 aa).

167-174 serves as a coordination point for ATP; it reads GERATGKT.

It belongs to the ATPase alpha/beta chains family. In terms of assembly, F-type ATPases have 2 components, CF(1) - the catalytic core - and CF(0) - the membrane proton channel. CF(1) has five subunits: alpha(3), beta(3), gamma(1), delta(1), epsilon(1). CF(0) has four main subunits: a(1), b(1), b'(1) and c(9-12).

It is found in the cell inner membrane. It carries out the reaction ATP + H2O + 4 H(+)(in) = ADP + phosphate + 5 H(+)(out). Its function is as follows. Produces ATP from ADP in the presence of a proton gradient across the membrane. The alpha chain is a regulatory subunit. The polypeptide is ATP synthase subunit alpha 2 (Cereibacter sphaeroides (strain ATCC 17023 / DSM 158 / JCM 6121 / CCUG 31486 / LMG 2827 / NBRC 12203 / NCIMB 8253 / ATH 2.4.1.) (Rhodobacter sphaeroides)).